Consider the following 304-residue polypeptide: Homoserine O-succinyltransferase (304 aa).

Residue Cys142 is the Acyl-thioester intermediate of the active site. 2 residues coordinate substrate: Lys163 and Ser192. The Proton acceptor role is filled by His235. The active site involves Glu237. Residue Arg249 coordinates substrate.

The protein belongs to the MetA family.

The protein resides in the cytoplasm. The enzyme catalyses L-homoserine + succinyl-CoA = O-succinyl-L-homoserine + CoA. Its pathway is amino-acid biosynthesis; L-methionine biosynthesis via de novo pathway; O-succinyl-L-homoserine from L-homoserine: step 1/1. Functionally, transfers a succinyl group from succinyl-CoA to L-homoserine, forming succinyl-L-homoserine. In Blochmanniella pennsylvanica (strain BPEN), this protein is Homoserine O-succinyltransferase.